A 667-amino-acid polypeptide reads, in one-letter code: MIDRVDNNHFDLVSDYQPTGDQPQAIQQLTAGIESGEKEQILLGATGTGKTFTISNVIAKVNKPTLILSHNKTLAGQLYGEFKKFFPNNAVEYFVSYYDYYQPEAYVPSSDTYIEKDSAINDEIDKLRHSATSSLLERNDVIVVASVSSIFGLGDPHEYQDHVVSLRVGMEIDRNDLLRKLVDIQFDRNDIDFQRGRFRVHGDVVEIFPASRDDHALRVEFFGDEIDRIREIDALTGEIVADREHVAIFPATHFMTNDAIMEHAIKGIEDELDGRLKELTADGKLLEAQRLKQRTTYDVEMLKEMGYTSGIENYSRFMDGRKPGEPPYTLLDFFPKDFLLVVDESHVTMPQVRGMYNGDRARKQMLVDYGFRLPSALDNRPLKLEEVEQHINQVVYMSATPGPYEMDRTKHVVQQIIRPTGLLDPTIEVRPIMGQIDDLVGEINKRIEVNERVFITTLTKKMAEDLTDYFKDLGIKVRYLHSDIKTLERTQIIRDLRLGKFDVLVGINLLREGIDVPEVSLVAILDADKEGFLRNERSLIQTIGRAARNEHGSVIMYADTTTDSMQAAMDETARRRAVQMKYNEDHHITPHTIKKAIPELIASTKTTEDAGKKDDFLETDFDDMTREQQLDMISKLEEQMKTAAKKLDFEQAATLRDTVMELKAQIS.

Positions 31-414 (AGIESGEKEQ…EMDRTKHVVQ (384 aa)) constitute a Helicase ATP-binding domain. 44-51 (GATGTGKT) is a binding site for ATP. A Beta-hairpin motif is present at residues 97-120 (YYDYYQPEAYVPSSDTYIEKDSAI). In terms of domain architecture, Helicase C-terminal spans 435–597 (QIDDLVGEIN…ITPHTIKKAI (163 aa)). The UVR domain maps to 630–665 (LDMISKLEEQMKTAAKKLDFEQAATLRDTVMELKAQ).

Belongs to the UvrB family. In terms of assembly, forms a heterotetramer with UvrA during the search for lesions. Interacts with UvrC in an incision complex.

It is found in the cytoplasm. The UvrABC repair system catalyzes the recognition and processing of DNA lesions. A damage recognition complex composed of 2 UvrA and 2 UvrB subunits scans DNA for abnormalities. Upon binding of the UvrA(2)B(2) complex to a putative damaged site, the DNA wraps around one UvrB monomer. DNA wrap is dependent on ATP binding by UvrB and probably causes local melting of the DNA helix, facilitating insertion of UvrB beta-hairpin between the DNA strands. Then UvrB probes one DNA strand for the presence of a lesion. If a lesion is found the UvrA subunits dissociate and the UvrB-DNA preincision complex is formed. This complex is subsequently bound by UvrC and the second UvrB is released. If no lesion is found, the DNA wraps around the other UvrB subunit that will check the other stand for damage. This chain is UvrABC system protein B, found in Lactiplantibacillus plantarum (strain ATCC BAA-793 / NCIMB 8826 / WCFS1) (Lactobacillus plantarum).